A 132-amino-acid chain; its full sequence is Holo-[acyl-carrier-protein] synthase (132 aa).

The Mg(2+) site is built by Asp-8 and Glu-64.

The protein belongs to the P-Pant transferase superfamily. AcpS family. Mg(2+) is required as a cofactor.

It is found in the cytoplasm. The enzyme catalyses apo-[ACP] + CoA = holo-[ACP] + adenosine 3',5'-bisphosphate + H(+). In terms of biological role, transfers the 4'-phosphopantetheine moiety from coenzyme A to a Ser of acyl-carrier-protein. This is Holo-[acyl-carrier-protein] synthase from Shewanella woodyi (strain ATCC 51908 / MS32).